Here is a 177-residue protein sequence, read N- to C-terminus: Large ribosomal subunit protein uL6 (177 aa).

This sequence belongs to the universal ribosomal protein uL6 family. As to quaternary structure, part of the 50S ribosomal subunit.

This protein binds to the 23S rRNA, and is important in its secondary structure. It is located near the subunit interface in the base of the L7/L12 stalk, and near the tRNA binding site of the peptidyltransferase center. The polypeptide is Large ribosomal subunit protein uL6 (Ectopseudomonas mendocina (strain ymp) (Pseudomonas mendocina)).